Here is a 295-residue protein sequence, read N- to C-terminus: Tyrosine recombinase XerC (295 aa).

In terms of domain architecture, Core-binding (CB) spans 1 to 84; the sequence is MTLEEQFLSY…SLKSFYRLLT (84 aa). The 185-residue stretch at 105-289 folds into the Tyr recombinase domain; sequence KLPEFFYQDE…SMQHLTAEYR (185 aa). Residues arginine 145, lysine 169, histidine 241, arginine 244, and histidine 267 contribute to the active site. Tyrosine 276 functions as the O-(3'-phospho-DNA)-tyrosine intermediate in the catalytic mechanism.

Belongs to the 'phage' integrase family. XerC subfamily. Forms a cyclic heterotetrameric complex composed of two molecules of XerC and two molecules of XerD.

The protein localises to the cytoplasm. Functionally, site-specific tyrosine recombinase, which acts by catalyzing the cutting and rejoining of the recombining DNA molecules. The XerC-XerD complex is essential to convert dimers of the bacterial chromosome into monomers to permit their segregation at cell division. It also contributes to the segregational stability of plasmids. The protein is Tyrosine recombinase XerC of Lactobacillus leichmannii.